Reading from the N-terminus, the 93-residue chain is Protein LSO1 (93 aa).

The disordered stretch occupies residues 1–73 (MHNTGKRYSE…TEKLRAKKER (73 aa)). The stretch at 20 to 83 (ARKRRQAYEK…DQLLAAEEEA (64 aa)) forms a coiled coil. Composition is skewed to basic and acidic residues over residues 25–49 (QAYE…EEGA) and 57–73 (LIME…KKER).

The protein localises to the nucleus. Its subcellular location is the cytoplasm. In terms of biological role, likely to play a role in iron homeostasis. The polypeptide is Protein LSO1 (Saccharomyces cerevisiae (strain ATCC 204508 / S288c) (Baker's yeast)).